The sequence spans 177 residues: B-phycoerythrin beta chain (177 aa).

The phycourobilin site is built by Cys50 and Cys61. N4-methylasparagine is present on Asn72. Residues Cys82 and Cys158 each contribute to the (2R,3E)-phycoerythrobilin site.

It belongs to the phycobiliprotein family. As to quaternary structure, heteromer of 6 alpha, 6 beta and one gamma chain. In terms of processing, contains two covalently linked phycoerythrobilin chromophores and one covalently linked phycourobilin chromophore.

The protein resides in the plastid. It localises to the chloroplast thylakoid membrane. Functionally, light-harvesting photosynthetic bile pigment-protein from the phycobiliprotein complex. The polypeptide is B-phycoerythrin beta chain (cpeB) (Rhodella violacea (Red alga)).